The following is a 199-amino-acid chain: Ribosome maturation factor RimM (199 aa).

Residues 100-195 enclose the PRC barrel domain; the sequence is ADEWYPKDLI…YLTLDPPGGL (96 aa).

Belongs to the RimM family. As to quaternary structure, binds ribosomal protein uS19.

Its subcellular location is the cytoplasm. In terms of biological role, an accessory protein needed during the final step in the assembly of 30S ribosomal subunit, possibly for assembly of the head region. Essential for efficient processing of 16S rRNA. May be needed both before and after RbfA during the maturation of 16S rRNA. It has affinity for free ribosomal 30S subunits but not for 70S ribosomes. This is Ribosome maturation factor RimM from Bifidobacterium longum (strain DJO10A).